We begin with the raw amino-acid sequence, 448 residues long: tRNA-2-methylthio-N(6)-dimethylallyladenosine synthase (448 aa).

In terms of domain architecture, MTTase N-terminal spans 7–123 (RSFYIHTFGC…LPALIGDAEE (117 aa)). [4Fe-4S] cluster contacts are provided by Cys-16, Cys-52, Cys-86, Cys-159, Cys-163, and Cys-166. One can recognise a Radical SAM core domain in the interval 145–375 (REVGVGAFVP…IDLQLSISAE (231 aa)). The 64-residue stretch at 378 to 441 (QEAVGSVVDV…SATLTGVNQG (64 aa)) folds into the TRAM domain.

The protein belongs to the methylthiotransferase family. MiaB subfamily. Monomer. Requires [4Fe-4S] cluster as cofactor.

The protein resides in the cytoplasm. The catalysed reaction is N(6)-dimethylallyladenosine(37) in tRNA + (sulfur carrier)-SH + AH2 + 2 S-adenosyl-L-methionine = 2-methylsulfanyl-N(6)-dimethylallyladenosine(37) in tRNA + (sulfur carrier)-H + 5'-deoxyadenosine + L-methionine + A + S-adenosyl-L-homocysteine + 2 H(+). Catalyzes the methylthiolation of N6-(dimethylallyl)adenosine (i(6)A), leading to the formation of 2-methylthio-N6-(dimethylallyl)adenosine (ms(2)i(6)A) at position 37 in tRNAs that read codons beginning with uridine. The chain is tRNA-2-methylthio-N(6)-dimethylallyladenosine synthase from Chlorobium phaeovibrioides (strain DSM 265 / 1930) (Prosthecochloris vibrioformis (strain DSM 265)).